Reading from the N-terminus, the 312-residue chain is Malate dehydrogenase (312 aa).

NAD(+) is bound by residues 12 to 17 and aspartate 36; that span reads GAGFTG. Residues arginine 87 and arginine 93 each coordinate substrate. NAD(+)-binding positions include asparagine 100 and 123 to 125; that span reads LTN. Residue asparagine 125 coordinates substrate. At serine 149 the chain carries Phosphoserine. Arginine 156 is a substrate binding site. Histidine 180 functions as the Proton acceptor in the catalytic mechanism.

The protein belongs to the LDH/MDH superfamily. MDH type 3 family.

The enzyme catalyses (S)-malate + NAD(+) = oxaloacetate + NADH + H(+). Its function is as follows. Catalyzes the reversible oxidation of malate to oxaloacetate. This is Malate dehydrogenase from Geobacillus thermodenitrificans.